The sequence spans 341 residues: Holliday junction branch migration complex subunit RuvB (341 aa).

A large ATPase domain (RuvB-L) region spans residues 3–184; sequence DDFDIRDARM…FGINMHLEYY (182 aa). Residues leucine 23, arginine 24, glycine 65, lysine 68, threonine 69, threonine 70, 131-133, arginine 174, tyrosine 184, and arginine 221 contribute to the ATP site; that span reads EDY. Threonine 69 is a binding site for Mg(2+). The tract at residues 185–255 is small ATPAse domain (RuvB-S); it reads DMETLTKIVL…IACFSLEALN (71 aa). The tract at residues 258–341 is head domain (RuvB-H); it reads RYGLDQIDNK…RVGEQGFLFD (84 aa). The DNA site is built by arginine 313 and arginine 318.

It belongs to the RuvB family. In terms of assembly, homohexamer. Forms an RuvA(8)-RuvB(12)-Holliday junction (HJ) complex. HJ DNA is sandwiched between 2 RuvA tetramers; dsDNA enters through RuvA and exits via RuvB. An RuvB hexamer assembles on each DNA strand where it exits the tetramer. Each RuvB hexamer is contacted by two RuvA subunits (via domain III) on 2 adjacent RuvB subunits; this complex drives branch migration. In the full resolvosome a probable DNA-RuvA(4)-RuvB(12)-RuvC(2) complex forms which resolves the HJ.

It localises to the cytoplasm. It catalyses the reaction ATP + H2O = ADP + phosphate + H(+). Functionally, the RuvA-RuvB-RuvC complex processes Holliday junction (HJ) DNA during genetic recombination and DNA repair, while the RuvA-RuvB complex plays an important role in the rescue of blocked DNA replication forks via replication fork reversal (RFR). RuvA specifically binds to HJ cruciform DNA, conferring on it an open structure. The RuvB hexamer acts as an ATP-dependent pump, pulling dsDNA into and through the RuvAB complex. RuvB forms 2 homohexamers on either side of HJ DNA bound by 1 or 2 RuvA tetramers; 4 subunits per hexamer contact DNA at a time. Coordinated motions by a converter formed by DNA-disengaged RuvB subunits stimulates ATP hydrolysis and nucleotide exchange. Immobilization of the converter enables RuvB to convert the ATP-contained energy into a lever motion, pulling 2 nucleotides of DNA out of the RuvA tetramer per ATP hydrolyzed, thus driving DNA branch migration. The RuvB motors rotate together with the DNA substrate, which together with the progressing nucleotide cycle form the mechanistic basis for DNA recombination by continuous HJ branch migration. Branch migration allows RuvC to scan DNA until it finds its consensus sequence, where it cleaves and resolves cruciform DNA. The protein is Holliday junction branch migration complex subunit RuvB of Parabacteroides distasonis (strain ATCC 8503 / DSM 20701 / CIP 104284 / JCM 5825 / NCTC 11152).